A 383-amino-acid polypeptide reads, in one-letter code: MSAVGIIAEFNPLHSGHEFLLNQARLIAKKDPIVVLMSGNYVQRGEMAIMSKWDRAKAALQSGADLVFETPFSTAVEPADLFSLGNIDQLAKLGVTDLVFGVEDANLNFAYLGSRIAEIPQNHMDFKDYSQTYSTQYNQMVAHEVGHEINQPNAILGLAYAVANHNLGSPLKLHPVNRIGAGHDDILQRSGVVQSASAIRNLLLHGEDTSNLKYWMPKNEANILAKQKVYPNWNLLYPFLKYRIESSSIEDLRRIYQMSEGLEYKMKQEIHLARDFTEFLRRIKSKRYTYARLRRLSLYTLLNVTYDDMLDSFNHESLMLLGFSKKGRQYLKQNRKNIQTEIISKVDKRSAKSGSLALQVRTDRLFEQVMGVDQNFGQRPIEV.

ATP-binding positions include 7–20 (IAEF…HEFL), Gly101, Asn153, and 178–179 (RI).

Belongs to the TmcAL family.

The protein resides in the cytoplasm. The enzyme catalyses cytidine(34) in elongator tRNA(Met) + acetate + ATP = N(4)-acetylcytidine(34) in elongator tRNA(Met) + AMP + diphosphate. Functionally, catalyzes the formation of N(4)-acetylcytidine (ac(4)C) at the wobble position of elongator tRNA(Met), using acetate and ATP as substrates. First activates an acetate ion to form acetyladenylate (Ac-AMP) and then transfers the acetyl group to tRNA to form ac(4)C34. The polypeptide is tRNA(Met) cytidine acetate ligase (Lactobacillus acidophilus (strain ATCC 700396 / NCK56 / N2 / NCFM)).